Consider the following 485-residue polypeptide: Glutamyl-tRNA(Gln) amidotransferase subunit A (485 aa).

Active-site charge relay system residues include Lys-78 and Ser-153. The active-site Acyl-ester intermediate is Ser-177.

It belongs to the amidase family. GatA subfamily. In terms of assembly, heterotrimer of A, B and C subunits.

The enzyme catalyses L-glutamyl-tRNA(Gln) + L-glutamine + ATP + H2O = L-glutaminyl-tRNA(Gln) + L-glutamate + ADP + phosphate + H(+). Allows the formation of correctly charged Gln-tRNA(Gln) through the transamidation of misacylated Glu-tRNA(Gln) in organisms which lack glutaminyl-tRNA synthetase. The reaction takes place in the presence of glutamine and ATP through an activated gamma-phospho-Glu-tRNA(Gln). This is Glutamyl-tRNA(Gln) amidotransferase subunit A from Bacillus cereus (strain ATCC 10987 / NRS 248).